Consider the following 220-residue polypeptide: Adenylate kinase (220 aa).

An ATP-binding site is contributed by 10-15; sequence GAGKGT. The segment at 30 to 59 is NMP; that stretch reads STGDMLRAAVKAGSPLGVEAKGYMDAGKLV. AMP is bound by residues Thr31, Arg36, 57–59, 85–88, and Gln92; these read KLV and GFPR. The interval 122–150 is disordered; it reads GRRTHPASGRTYHVKFNPPKVEGKDDVTG. The interval 122 to 159 is LID; the sequence is GRRTHPASGRTYHVKFNPPKVEGKDDVTGEPLIQRDDD. Residues Arg123 and 132–133 contribute to the ATP site; that span reads TY. AMP contacts are provided by Arg156 and Arg167. Gly206 is a binding site for ATP.

Belongs to the adenylate kinase family. In terms of assembly, monomer.

The protein resides in the cytoplasm. The enzyme catalyses AMP + ATP = 2 ADP. It functions in the pathway purine metabolism; AMP biosynthesis via salvage pathway; AMP from ADP: step 1/1. In terms of biological role, catalyzes the reversible transfer of the terminal phosphate group between ATP and AMP. Plays an important role in cellular energy homeostasis and in adenine nucleotide metabolism. The protein is Adenylate kinase of Burkholderia ambifaria (strain MC40-6).